Consider the following 875-residue polypeptide: Cytosolic phospholipase A2 epsilon (875 aa).

The interval 16 to 70 is disordered; the sequence is THASEGHHGLGTSMLVPKNPQGEEDSKLGRNCSGFEDAQDPQTAVPSSPLLSMAS. The 124-residue stretch at 60-183 folds into the C2 domain; sequence VPSSPLLSMA…CLRNKTHVKF (124 aa). Residues 61–70 show a composition bias toward low complexity; that stretch reads PSSPLLSMAS. Ca(2+) contacts are provided by Asp-97, Asp-103, Asp-153, Asp-155, and Asp-161. A PLA2c domain is found at 332–875; the sequence is PCSDTLDVRL…KKRMRSQCPS (544 aa). The active-site Nucleophile is the Ser-420. The active-site Proton acceptor is the Asp-708. Position 808 is a phosphoserine (Ser-808). The tract at residues 865-875 is required for localization at membrane structures; sequence EKKRMRSQCPS.

Ca(2+) is required as a cofactor. In terms of tissue distribution, predominantly expressed in brain, heart, skeletal muscle, testis and thyroid. Expressed in neurons but not astrocytes or microglia. Expressed at lower level in stomach.

The protein localises to the cytoplasm. It localises to the cytosol. Its subcellular location is the early endosome membrane. It is found in the lysosome membrane. The protein resides in the cell membrane. It catalyses the reaction a 1,2-diacyl-sn-glycero-3-phosphoethanolamine + a 1,2-diacyl-sn-glycero-3-phosphocholine = an N-acyl-1,2-diacyl-sn-glycero-3-phosphoethanolamine + a 2-acyl-sn-glycero-3-phosphocholine + H(+). The catalysed reaction is 1-hexadecanoyl-2-octadecanoyl-sn-glycero-3-phosphocholine + 1,2-di-(9Z-octadecenoyl)-sn-glycero-3-phosphoethanolamine = 2-octadecanoyl-sn-glycero-3-phosphocholine + N-hexadecanoyl-1,2-di-(9Z-octadecenoyl)-sn-glycero-3-phosphoethanolamine + H(+). It carries out the reaction 1-octadecanoyl-2-hexadecanoyl-sn-glycero-3-phosphocholine + 1,2-di-(9Z-octadecenoyl)-sn-glycero-3-phosphoethanolamine = N-octadecanoyl-1,2-di-(9Z-octadecenoyl)-sn-glycero-3-phosphoethanolamine + 2-hexadecanoyl-sn-glycero-3-phosphocholine + H(+). The enzyme catalyses 1,2-di-(9Z-octadecenoyl)-sn-glycero-3-phosphoethanolamine + 1,2-dihexadecanoyl-sn-glycero-3-phosphocholine = N-hexadecanoyl-1,2-di-(9Z-octadecenoyl)-sn-glycero-3-phosphoethanolamine + 2-hexadecanoyl-sn-glycero-3-phosphocholine + H(+). It catalyses the reaction 1,2-di-(5Z,8Z,11Z,14Z-eicosatetraenoyl)-sn-glycero-3-phosphocholine + 1,2-di-(9Z-octadecenoyl)-sn-glycero-3-phosphoethanolamine = N-(5Z,8Z,11Z,14Z-eicosatetraenoyl)-1,2-di-(9Z-octadecenoyl)-sn-glycero-3-phosphoethanolamine + 2-(5Z,8Z,11Z,14Z)-eicosatetraenoyl-sn-glycero-3-phosphocholine + H(+). The catalysed reaction is 2 1,2-di-(9Z-octadecenoyl)-sn-glycero-3-phosphoethanolamine = N,1,2-tri-(9Z-octadecenoyl)-sn-glycero-3-phosphoethanolamine + 2-(9Z-octadecenoyl)-sn-glycero-3-phosphoethanolamine + H(+). It carries out the reaction a 1,2-diacyl-sn-glycero-3-phosphocholine + H2O = a 1-acyl-sn-glycero-3-phosphocholine + a fatty acid + H(+). The enzyme catalyses 1-(1Z-octadecenyl)-2-(9Z-octadecenoyl)-sn-glycero-3-phosphoethanolamine + 1,2-dihexadecanoyl-sn-glycero-3-phosphocholine = 1-O-(1Z-octadecenoyl)-2-(9Z-octadecenoyl)-sn-glycero-3-phospho-N-hexadecanoyl-ethanolamine + 2-hexadecanoyl-sn-glycero-3-phosphocholine + H(+). It catalyses the reaction 1-hexadecanoyl-2-(5Z,8Z,11Z,14Z-eicosatetraenoyl)-sn-glycero-3-phosphocholine + H2O = 1-hexadecanoyl-sn-glycero-3-phosphocholine + (5Z,8Z,11Z,14Z)-eicosatetraenoate + H(+). The catalysed reaction is 1-hexadecanoyl-sn-glycero-3-phosphocholine + H2O = sn-glycerol 3-phosphocholine + hexadecanoate + H(+). Stimulated by cytosolic Ca(2+). Stimulated by anionic phospholipids such as phosphatidylserine. In terms of biological role, calcium-dependent N-acyltransferase involved in the biosynthesis of N-acyl ethanolamines (NAEs) in the brain. Transfers the sn-1 fatty acyl chain of phosphatidylcholine (fatty acyl donor) to the amine group of phosphatidylethanolamine (fatty acyl acceptor) to generate N-acyl phosphatidylethanolamine (NAPE). Similarly can use plasmenylethanolamine as a fatty acyl acceptor to form N-acyl plasmenylethanolamine (N-Acyl-PlsEt). Both NAPE and N-Acyl-PlsEt can serve as precursors of bioactive NAEs like N-arachidonoyl phosphatidylethanolamine also called anandamide. Has weak phospholipase A2 and lysophospholipase activities. Regulates intracellular membrane trafficking that requires modulation of membrane curvature as it occurs by enrichment in lysophospholipids. Promotes tubule formation involved in clathrin-independent endocytotic trafficking and cargo recycling. The chain is Cytosolic phospholipase A2 epsilon (Pla2g4e) from Mus musculus (Mouse).